The chain runs to 325 residues: 4-hydroxy-3-methylbut-2-enyl diphosphate reductase (325 aa).

Cys25 contributes to the [4Fe-4S] cluster binding site. Residues His54 and His87 each contribute to the (2E)-4-hydroxy-3-methylbut-2-enyl diphosphate site. 2 residues coordinate dimethylallyl diphosphate: His54 and His87. 2 residues coordinate isopentenyl diphosphate: His54 and His87. Cys109 contacts [4Fe-4S] cluster. His137 contacts (2E)-4-hydroxy-3-methylbut-2-enyl diphosphate. Dimethylallyl diphosphate is bound at residue His137. His137 is an isopentenyl diphosphate binding site. The active-site Proton donor is the Glu139. A (2E)-4-hydroxy-3-methylbut-2-enyl diphosphate-binding site is contributed by Thr179. Cys209 provides a ligand contact to [4Fe-4S] cluster. 4 residues coordinate (2E)-4-hydroxy-3-methylbut-2-enyl diphosphate: Ser237, Ser238, Asn239, and Ser282. Dimethylallyl diphosphate-binding residues include Ser237, Ser238, Asn239, and Ser282. Ser237, Ser238, Asn239, and Ser282 together coordinate isopentenyl diphosphate.

Belongs to the IspH family. [4Fe-4S] cluster is required as a cofactor.

It carries out the reaction isopentenyl diphosphate + 2 oxidized [2Fe-2S]-[ferredoxin] + H2O = (2E)-4-hydroxy-3-methylbut-2-enyl diphosphate + 2 reduced [2Fe-2S]-[ferredoxin] + 2 H(+). The catalysed reaction is dimethylallyl diphosphate + 2 oxidized [2Fe-2S]-[ferredoxin] + H2O = (2E)-4-hydroxy-3-methylbut-2-enyl diphosphate + 2 reduced [2Fe-2S]-[ferredoxin] + 2 H(+). The protein operates within isoprenoid biosynthesis; dimethylallyl diphosphate biosynthesis; dimethylallyl diphosphate from (2E)-4-hydroxy-3-methylbutenyl diphosphate: step 1/1. Its pathway is isoprenoid biosynthesis; isopentenyl diphosphate biosynthesis via DXP pathway; isopentenyl diphosphate from 1-deoxy-D-xylulose 5-phosphate: step 6/6. Catalyzes the conversion of 1-hydroxy-2-methyl-2-(E)-butenyl 4-diphosphate (HMBPP) into a mixture of isopentenyl diphosphate (IPP) and dimethylallyl diphosphate (DMAPP). Acts in the terminal step of the DOXP/MEP pathway for isoprenoid precursor biosynthesis. The polypeptide is 4-hydroxy-3-methylbut-2-enyl diphosphate reductase (Corynebacterium glutamicum (strain ATCC 13032 / DSM 20300 / JCM 1318 / BCRC 11384 / CCUG 27702 / LMG 3730 / NBRC 12168 / NCIMB 10025 / NRRL B-2784 / 534)).